Here is an 895-residue protein sequence, read N- to C-terminus: uncharacterized protein (895 aa).

Position 2 to 19 (2 to 19 (NISVIGTGYVGLIQAVGL)) interacts with NAD(+). Cys261 is a catalytic residue. Positions 468–614 (LIGYYLSEGW…LLILLQLLGI (147 aa)) constitute a DOD-type homing endonuclease domain.

It belongs to the UDP-glucose/GDP-mannose dehydrogenase family. In terms of processing, this protein undergoes a protein self splicing that involves a post-translational excision of the intervening region (intein) followed by peptide ligation.

This is an uncharacterized protein from Methanocaldococcus jannaschii (strain ATCC 43067 / DSM 2661 / JAL-1 / JCM 10045 / NBRC 100440) (Methanococcus jannaschii).